Reading from the N-terminus, the 666-residue chain is Protein-arginine deiminase type-4 (666 aa).

Ca(2+) is bound by residues Asn153, Asp155, Asp165, Asp168, Asp176, and Asp179. Citrulline occurs at positions 212 and 218. Gln349 lines the Ca(2+) pocket. The active site involves Asp350. The Ca(2+) site is built by Glu351, Glu353, Asp369, and Ser370. Citrulline occurs at positions 372, 374, and 383. Arg374 is a binding site for substrate. 3 residues coordinate Ca(2+): Phe407, Leu410, and Glu411. Catalysis depends on residues His471, Asp473, and Cys648.

Belongs to the protein arginine deiminase family. It depends on Ca(2+) as a cofactor. Post-translationally, autocitrullination at Arg-372 and Arg-374 inactivates the enzyme. In terms of tissue distribution, epidermis.

The protein localises to the cytoplasm. It is found in the nucleus. The protein resides in the cytoplasmic granule. It carries out the reaction L-arginyl-[protein] + H2O = L-citrullyl-[protein] + NH4(+). Catalyzes the citrullination/deimination of arginine residues of proteins such as histones, thereby playing a key role in histone code and regulation of stem cell maintenance. Citrullinates histone H1 at 'Arg-54' (to form H1R54ci), histone H3 at 'Arg-2', 'Arg-8', 'Arg-17' and/or 'Arg-26' (to form H3R2ci, H3R8ci, H3R17ci, H3R26ci, respectively) and histone H4 at 'Arg-3' (to form H4R3ci). Acts as a key regulator of stem cell maintenance by mediating citrullination of histone H1: citrullination of 'Arg-54' of histone H1 (H1R54ci) results in H1 displacement from chromatin and global chromatin decondensation, thereby promoting pluripotency and stem cell maintenance. Promotes profound chromatin decondensation during the innate immune response to infection in neutrophils by mediating formation of H1R54ci. Required for the formation of neutrophil extracellular traps (NETs); NETs are mainly composed of DNA fibers and are released by neutrophils to bind pathogens during inflammation. Citrullination of histone H3 prevents their methylation by CARM1 and HRMT1L2/PRMT1 and represses transcription. Citrullinates EP300/P300 at 'Arg-2142', which favors its interaction with NCOA2/GRIP1. The sequence is that of Protein-arginine deiminase type-4 (Padi4) from Rattus norvegicus (Rat).